The sequence spans 384 residues: NAD-capped RNA hydrolase NPY1 (384 aa).

The Zn(2+) site is built by Cys-179, Cys-182, Cys-197, and Cys-206. In terms of domain architecture, Nudix hydrolase spans 219 to 351 (PRTDPTVIIA…AGGYRVPFKN (133 aa)). The Mg(2+) site is built by Ala-256, Glu-272, Glu-276, and Glu-322. Substrate contacts are provided by residues 256 to 258 (AGF), Glu-272, Glu-276, and Glu-322. The Nudix box signature appears at 257–278 (GFMEPSETIEEACIREIWEETG). A Microbody targeting signal motif is present at residues 378–380 (KTS).

Belongs to the Nudix hydrolase family. NudC subfamily. As to quaternary structure, homodimer. The cofactor is Mg(2+). It depends on Zn(2+) as a cofactor.

Its subcellular location is the peroxisome. The enzyme catalyses a 5'-end NAD(+)-phospho-ribonucleoside in mRNA + H2O = a 5'-end phospho-adenosine-phospho-ribonucleoside in mRNA + beta-nicotinamide D-ribonucleotide + 2 H(+). The catalysed reaction is NAD(+) + H2O = beta-nicotinamide D-ribonucleotide + AMP + 2 H(+). It catalyses the reaction NADH + H2O = reduced beta-nicotinamide D-ribonucleotide + AMP + 2 H(+). In terms of biological role, mRNA decapping enzyme that specifically removes the nicotinamide adenine dinucleotide (NAD) cap from a subset of mRNAs by hydrolyzing the diphosphate linkage to produce nicotinamide mononucleotide (NMN) and 5' monophosphate mRNA. The NAD-cap is present at the 5'-end of some RNAs; in contrast to the canonical N7 methylguanosine (m7G) cap, the NAD cap promotes mRNA decay. Mediates the hydrolysis of some nucleoside diphosphate derivatives. This Saccharomyces cerevisiae (strain ATCC 204508 / S288c) (Baker's yeast) protein is NAD-capped RNA hydrolase NPY1.